Here is a 151-residue protein sequence, read N- to C-terminus: Ribosomal RNA large subunit methyltransferase H (151 aa).

Residues glycine 100 and 119–124 (LSRMTF) each bind S-adenosyl-L-methionine.

It belongs to the RNA methyltransferase RlmH family. Homodimer.

The protein localises to the cytoplasm. It carries out the reaction pseudouridine(1915) in 23S rRNA + S-adenosyl-L-methionine = N(3)-methylpseudouridine(1915) in 23S rRNA + S-adenosyl-L-homocysteine + H(+). In terms of biological role, specifically methylates the pseudouridine at position 1915 (m3Psi1915) in 23S rRNA. The polypeptide is Ribosomal RNA large subunit methyltransferase H (Thermotoga neapolitana (strain ATCC 49049 / DSM 4359 / NBRC 107923 / NS-E)).